Here is a 292-residue protein sequence, read N- to C-terminus: uncharacterized protein (292 aa).

This is an uncharacterized protein from Haemophilus influenzae (strain ATCC 51907 / DSM 11121 / KW20 / Rd).